The chain runs to 495 residues: Sulfhydryl oxidase 2 (495 aa).

An N-terminal signal peptide occupies residues 1–15; it reads MSLVHLLLFAGLVIA. Residues 29–164 enclose the Thioredoxin domain; that stretch reads EISDQKDKAV…LLNWINKQIG (136 aa). A glycan (N-linked (GlcNAc...) asparagine) is linked at asparagine 41. Catalysis depends on nucleophile residues cysteine 66 and cysteine 69. A disulfide bond links cysteine 66 and cysteine 69. Asparagine 182, asparagine 257, asparagine 266, and asparagine 292 each carry an N-linked (GlcNAc...) asparagine glycan. Residues cysteine 287 and cysteine 299 are joined by a disulfide bond. The ERV/ALR sulfhydryl oxidase domain occupies 290 to 392; that stretch reads SKNDTRGFSC…GDPKFPKIIW (103 aa). Residues arginine 295, tryptophan 302, histidine 306, glutamate 336, histidine 340, 363–370, lysine 389, and tryptophan 392 contribute to the FAD site; that span reads WSTHNKVN. A disulfide bond links cysteine 334 and cysteine 337. A disulfide bond links cysteine 398 and cysteine 401.

Requires FAD as cofactor.

The protein resides in the secreted. It carries out the reaction 2 R'C(R)SH + O2 = R'C(R)S-S(R)CR' + H2O2. Functionally, catalyzes the oxidation of sulfhydryl groups in peptide and protein thiols to disulfides with the reduction of oxygen to hydrogen peroxide. May contribute to disulfide bond formation in a variety of secreted proteins. The protein is Sulfhydryl oxidase 2 (QSOX2) of Arabidopsis thaliana (Mouse-ear cress).